A 406-amino-acid chain; its full sequence is MKRAIILVLDSFGIGAAGDADKFGDVGSDTMGHIAEQCDKGLADNGNRKGSLTLPNLSKLGLAMAGKESTGKFSAGLDANAEIIGAYGHAAELSSGKDTPSGHWEIAGVPVLFDWGYFTDKENSFPKELTDRILERANLPGYLGNCHASGTQVLDDLGEEHMKTGMPIFYTSADSVFQIACHEETFGLDNLLTLCQIAREELEDYNIGRVIARPFIGPGKGQFERTGNRRDLSVEPPAATILQKLVDEKGGQVHSIGKISDIYAGCGITKKTKATGIPALFDATKEAIEQAGDNTIVFTNFVDFDSAYGHRRDVAGYAAALEYFDGRLPEIMDMLQEDDILILTADHGCDPTWPGTDHTREHIPVLVYGHKVPAGSLGRRDTFADIGQTLAEYFETSDMEYGKSFL.

Mn(2+) is bound by residues Asp10, Asp305, His310, Asp346, His347, and His358.

This sequence belongs to the phosphopentomutase family. Mn(2+) is required as a cofactor.

The protein localises to the cytoplasm. It catalyses the reaction 2-deoxy-alpha-D-ribose 1-phosphate = 2-deoxy-D-ribose 5-phosphate. The catalysed reaction is alpha-D-ribose 1-phosphate = D-ribose 5-phosphate. It participates in carbohydrate degradation; 2-deoxy-D-ribose 1-phosphate degradation; D-glyceraldehyde 3-phosphate and acetaldehyde from 2-deoxy-alpha-D-ribose 1-phosphate: step 1/2. Its function is as follows. Isomerase that catalyzes the conversion of deoxy-ribose 1-phosphate (dRib-1-P) and ribose 1-phosphate (Rib-1-P) to deoxy-ribose 5-phosphate (dRib-5-P) and ribose 5-phosphate (Rib-5-P), respectively. This chain is Phosphopentomutase, found in Aliivibrio fischeri (strain MJ11) (Vibrio fischeri).